A 78-amino-acid polypeptide reads, in one-letter code: Consomatin Te1 (78 aa).

Positions 1–22 are cleaved as a signal peptide; that stretch reads MQTAYWMMVMMMVWITAPLSEG. A propeptide spanning residues 23-56 is cleaved from the precursor; sequence GQLNDVIRGLVPDNLAPQLVLQSLDSRRHPHGIR. A disulfide bridge connects residues C63 and C68. A D-tryptophan modification is found at W65. A 4-hydroxyproline mark is found at P69, P70, and P72. Residues 74-78 constitute a propeptide that is removed on maturation; it reads RRLGS.

The protein belongs to the conotoxin C superfamily. Consomatin family. In terms of tissue distribution, expressed by the venom duct.

It localises to the secreted. Moderately activates human somatostatin receptors (SSTR) with a preferential activation of SSTR1 and SSTR4. In vivo, does not cause behavioral changes in mice within a few minutes of intracranial injection, but causes a progressive loss of movement thereafter. Four to five hours after injection, mice recover, even with the highest dose tested. Shows antinociception and antihyperalgesia activities in two mouse models of acute pain, most probably by acting outside the central nervous system. The sequence is that of Consomatin Te1 from Conus terebra (Sea snail).